We begin with the raw amino-acid sequence, 515 residues long: 2,3-bisphosphoglycerate-independent phosphoglycerate mutase (515 aa).

Mn(2+)-binding residues include D14 and S64. S64 (phosphoserine intermediate) is an active-site residue. Residues H125, 155 to 156 (RD), R187, R193, 263 to 266 (RADR), and K337 contribute to the substrate site. Positions 404, 408, 445, 446, and 464 each coordinate Mn(2+).

The protein belongs to the BPG-independent phosphoglycerate mutase family. As to quaternary structure, monomer. Requires Mn(2+) as cofactor.

It catalyses the reaction (2R)-2-phosphoglycerate = (2R)-3-phosphoglycerate. It participates in carbohydrate degradation; glycolysis; pyruvate from D-glyceraldehyde 3-phosphate: step 3/5. In terms of biological role, catalyzes the interconversion of 2-phosphoglycerate and 3-phosphoglycerate. This Pseudomonas aeruginosa (strain ATCC 15692 / DSM 22644 / CIP 104116 / JCM 14847 / LMG 12228 / 1C / PRS 101 / PAO1) protein is 2,3-bisphosphoglycerate-independent phosphoglycerate mutase.